The primary structure comprises 379 residues: UDP-4-amino-4-deoxy-L-arabinose--oxoglutarate aminotransferase (379 aa).

Position 182 is an N6-(pyridoxal phosphate)lysine (K182).

The protein belongs to the DegT/DnrJ/EryC1 family. ArnB subfamily. As to quaternary structure, homodimer. Pyridoxal 5'-phosphate serves as cofactor.

The catalysed reaction is UDP-4-amino-4-deoxy-beta-L-arabinose + 2-oxoglutarate = UDP-beta-L-threo-pentopyranos-4-ulose + L-glutamate. The protein operates within nucleotide-sugar biosynthesis; UDP-4-deoxy-4-formamido-beta-L-arabinose biosynthesis; UDP-4-deoxy-4-formamido-beta-L-arabinose from UDP-alpha-D-glucuronate: step 2/3. It participates in bacterial outer membrane biogenesis; lipopolysaccharide biosynthesis. Catalyzes the conversion of UDP-4-keto-arabinose (UDP-Ara4O) to UDP-4-amino-4-deoxy-L-arabinose (UDP-L-Ara4N). The modified arabinose is attached to lipid A and is required for resistance to polymyxin and cationic antimicrobial peptides. In Salmonella dublin (strain CT_02021853), this protein is UDP-4-amino-4-deoxy-L-arabinose--oxoglutarate aminotransferase.